Reading from the N-terminus, the 691-residue chain is Calcium-binding and coiled-coil domain-containing protein 1 (691 aa).

Positions 1-30 are p300 KIX-binding; the sequence is MEESSLSRAPSRGGVNFLNVARTYIPNTKV. The tract at residues 1-190 is N-terminal AD (CTNNB1 binding site); that stretch reads MEESSLSRAP…VQELEAALAT (190 aa). Phosphoserine is present on Ser-4. Residues 45-125 are interaction with GATA1; the sequence is SDWIGIFKVE…FQFREPRPMD (81 aa). Coiled-coil stretches lie at residues 145–205, 232–339, and 417–514; these read KATV…YKGL, ELED…AELE, and QSME…ADEK. The interval 501-691 is C-terminal AD (CTNNB1 binding site); interaction with CCAR1; sequence RKLEARLEKV…FSTQDPFTFE (191 aa). The tract at residues 512–605 is disordered; it reads DEKWTEDAAT…DSEAEDEKSV (94 aa). A UBZ1-type zinc finger spans residues 653 to 679; sequence WKECPICKERFPAESDKDALEGHMDGH. Residues Cys-656, Cys-659, His-675, and His-679 each contribute to the Zn(2+) site.

It belongs to the CALCOCO family. In terms of assembly, part of a calphoglin complex consisting of CALCOCO1, PPA1 and PGM. Interacts with the bHLH-PAS domains of GRIP1, AHR and ARNT. Interacts with CTNNB1 via both its N- and C-terminal regions. Interacts with EP300. Interacts with CCAR1 (via N-terminus) and GATA1. As to expression, expressed in all tissues examined except spleen, with high levels of expression in the heart and kidney.

The protein localises to the cytoplasm. The protein resides in the nucleus. Functionally, functions as a coactivator for aryl hydrocarbon and nuclear receptors (NR). Recruited to promoters through its contact with the N-terminal basic helix-loop-helix-Per-Arnt-Sim (PAS) domain of transcription factors or coactivators, such as NCOA2. During ER-activation acts synergistically in combination with other NCOA2-binding proteins, such as EP300, CREBBP and CARM1. Involved in the transcriptional activation of target genes in the Wnt/CTNNB1 pathway. Functions as a secondary coactivator in LEF1-mediated transcriptional activation via its interaction with CTNNB1. Coactivator function for nuclear receptors and LEF1/CTNNB1 involves differential utilization of two different activation regions. In association with CCAR1 enhances GATA1- and MED1-mediated transcriptional activation from the gamma-globin promoter during erythroid differentiation of K562 erythroleukemia cells. In Mus musculus (Mouse), this protein is Calcium-binding and coiled-coil domain-containing protein 1 (Calcoco1).